Reading from the N-terminus, the 636-residue chain is Polyadenylate-binding protein 1 (636 aa).

At M1 the chain carries N-acetylmethionine. RRM domains are found at residues 11–89 (ASLY…WSQR), 99–175 (GNIF…RFKS), 191–268 (TNVY…RAQK), and 294–370 (VNLY…LAQR). Positions 166–289 (RKVFVGRFKS…FEQMKQDRIT (124 aa)) are CSDE1-binding. Position 299 is an N6-methyllysine (K299). Phosphoserine is present on S315. T319 carries the post-translational modification Phosphothreonine. 4 positions are modified to omega-N-methylarginine: R385, R419, R432, and R436. An omega-N-methylated arginine; by CARM1 mark is found at R455 and R460. Omega-N-methylarginine occurs at positions 475 and 481. Asymmetric dimethylarginine; alternate is present on R493. R493 is subject to Dimethylated arginine; alternate. R493 is subject to Omega-N-methylarginine; alternate. Residue R506 is modified to Omega-N-methylarginine. Residue K512 is modified to N6-acetyllysine. Residue R518 is modified to Omega-N-methylarginine. One can recognise a PABC domain in the interval 542–619 (QEPLTASMLA…AVAVLQAHQA (78 aa)).

It belongs to the polyadenylate-binding protein type-1 family. May form homodimers. Component of a multisubunit autoregulatory ribonucleoprotein complex (ARC), at least composed of IGF2BP1, PABPC1 and CSDE1. Directly interacts with IGF2BP1. Part of a complex associated with the FOS mCRD domain and consisting of HNRPD, SYNCRIP, PAIP1 and CSDE1/UNR. Interacts with PAIP1 and PAIP2 (via the PABPC1-interacting motifs PAM1 and PAM2). Interacts with PAIP1 with a 1:1 stoichiometry and with PAIP2 with a 1:2 stoichiometry. The interaction with CSDE1 is direct and RNA-independent. Found in a mRNP complex with YBX2. Interacts with TENT2/GLD2. Identified in the spliceosome C complex. Identified in a mRNP complex, at least composed of DHX9, DDX3X, ELAVL1, HNRNPU, IGF2BP1, ILF3, PABPC1, PCBP2, PTBP2, STAU1, STAU2, SYNCRIP and YBX1. The interaction with DDX3X is direct and RNA-independent. This interaction increases in stressed cells and decreases during cell recovery. Identified in a IGF2BP1-dependent mRNP granule complex containing untranslated mRNAs. Interacts with NXF1/TAP. Interacts with PIWIL1. Interacts with AGO1, AGO2, GSPT1 and GSPT2. Interacts with LARP4B. Interacts (via the second and third RRM domains and the C-terminus) with PAIP2B (via central acidic portion and C-terminus). Forms a complex with LARP1 and SHFL. Interacts with LARP4. Interacts with ZFC3H1 in a RNase-sensitive manner. Interacts with TRIM71 (via NHL repeats) in an RNA-dependent manner. Interacts with TENT5C; the interaction has no effect on TENT5C poly(A) polymerase function. Interacts with G3BP1 and G3BP2. Interacts with ENDOV; the interaction is RNA-dependent and stimulates ENDOV activity. Interacts with UPF1; the interaction is RNA-dependent. Interacts with IGF2BP2 and IGF2BP3. May interact with SETX. Interacts with RBM46. Interacts with PAN3. In terms of processing, phosphorylated by MAPKAPK2. Post-translationally, methylated by CARM1. Arg-493 is dimethylated, probably to asymmetric dimethylarginine.

It is found in the cytoplasm. It localises to the stress granule. The protein resides in the nucleus. Its subcellular location is the cell projection. The protein localises to the lamellipodium. In terms of biological role, binds the poly(A) tail of mRNA, including that of its own transcript, and regulates processes of mRNA metabolism such as pre-mRNA splicing and mRNA stability. Its function in translational initiation regulation can either be enhanced by PAIP1 or repressed by PAIP2. Can probably bind to cytoplasmic RNA sequences other than poly(A) in vivo. Binds to N6-methyladenosine (m6A)-containing mRNAs and contributes to MYC stability by binding to m6A-containing MYC mRNAs. Involved in translationally coupled mRNA turnover. Implicated with other RNA-binding proteins in the cytoplasmic deadenylation/translational and decay interplay of the FOS mRNA mediated by the major coding-region determinant of instability (mCRD) domain. Involved in regulation of nonsense-mediated decay (NMD) of mRNAs containing premature stop codons; for the recognition of premature termination codons (PTC) and initiation of NMD a competitive interaction between UPF1 and PABPC1 with the ribosome-bound release factors is proposed. By binding to long poly(A) tails, may protect them from uridylation by ZCCHC6/ZCCHC11 and hence contribute to mRNA stability. The sequence is that of Polyadenylate-binding protein 1 (PABPC1) from Pongo abelii (Sumatran orangutan).